The following is a 1138-amino-acid chain: Pesticidal crystal protein Cry7Ab (1138 aa).

Belongs to the delta endotoxin family.

Promotes colloidosmotic lysis by binding to the midgut epithelial cells of Coleoptera. The chain is Pesticidal crystal protein Cry7Ab (cry7Ab) from Bacillus thuringiensis subsp. dakota.